The sequence spans 272 residues: Isoprenyl transferase (272 aa).

The active site involves aspartate 32. Aspartate 32 contacts Mg(2+). Substrate contacts are provided by residues 33-36 (GNGR), tryptophan 37, arginine 45, histidine 49, and 77-79 (STE). The Proton acceptor role is filled by asparagine 80. Substrate-binding positions include tryptophan 81, arginine 83, arginine 200, and 206 to 208 (RIS). Glutamate 219 serves as a coordination point for Mg(2+).

The protein belongs to the UPP synthase family. In terms of assembly, homodimer. Mg(2+) serves as cofactor.

Its function is as follows. Catalyzes the condensation of isopentenyl diphosphate (IPP) with allylic pyrophosphates generating different type of terpenoids. This chain is Isoprenyl transferase, found in Prochlorococcus marinus subsp. pastoris (strain CCMP1986 / NIES-2087 / MED4).